We begin with the raw amino-acid sequence, 340 residues long: Adenosine receptor A2b (340 aa).

The Extracellular segment spans residues 1–6; sequence MNTMKT. A helical transmembrane segment spans residues 7–31; the sequence is TYIVLELIIAVLSIAGNVLVCWAVA. Residues 32–41 lie on the Cytoplasmic side of the membrane; sequence INSTLKNATN. The helical transmembrane segment at 42-65 threads the bilayer; the sequence is YFLVSLAVADIAVGLLAIPFAITI. At 66–76 the chain is on the extracellular side; it reads SIGFQVDFHSC. A disulfide bridge connects residues C76 and C171. Residues 77-99 traverse the membrane as a helical segment; it reads LFFACFVLVLTQSSIFSLLAVAI. Over 100 to 119 the chain is Cytoplasmic; that stretch reads DRYLAIKIPLRYNSLVTGKR. Residues 120 to 142 traverse the membrane as a helical segment; it reads ARGLIAVLWLLSFVIGLTPLMGW. Over 143 to 178 the chain is Extracellular; it reads NKAMSGCPNSTNETGADHGAGHHGCFISCLFENVVT. N-linked (GlcNAc...) asparagine glycosylation is found at N151 and N154. An adenosine-binding site is contributed by E174. A helical membrane pass occupies residues 179–203; the sequence is MSYMVYFNFFGCVLLPLIIMLGIYI. The Cytoplasmic portion of the chain corresponds to 204 to 235; sequence KIFMVACKQLHQIELMGNSRTTLQKEVHAAKS. A helical transmembrane segment spans residues 236 to 259; that stretch reads LAIIVGLFAFCWLPLHILNCITHF. Residue N254 coordinates adenosine. Topologically, residues 260 to 267 are extracellular; it reads HEEFSKSK. Residues 268-291 form a helical membrane-spanning segment; the sequence is PEWVMYVAIILSHANSVINPIIYA. 2 residues coordinate adenosine: S279 and H280. At 292 to 340 the chain is on the cytoplasmic side; the sequence is YRIRDFRYTFHKIISKILCKTDDFPKCTTDNNQHLTVTNVNAPAASVTI. C310 carries S-palmitoyl cysteine lipidation.

It belongs to the G-protein coupled receptor 1 family.

It is found in the cell membrane. Its function is as follows. Receptor for adenosine. The activity of this receptor is mediated by G proteins which activate adenylyl cyclase. The protein is Adenosine receptor A2b (ADORA2B) of Gallus gallus (Chicken).